The chain runs to 560 residues: Protein AATF (560 aa).

Position 2 is an N-acetylalanine (alanine 2). Phosphoserine occurs at positions 61 and 63. The segment at 76–208 (TSRKAWNEDH…GDRNSEDDGV (133 aa)) is disordered. The segment covering 94–129 (SDEEISDEEGSGDEDSEGLGLEEYDEDDLGAAEEQE) has biased composition (acidic residues). Serine 150 and serine 155 each carry phosphoserine. Residues 156–165 (DFEKFTKGMD) are compositionally biased toward basic and acidic residues. Over residues 168 to 195 (GSSEEEEDEESGMEEGDDAEDSQGESEE) the composition is skewed to acidic residues. Phosphoserine is present on residues serine 203, serine 273, serine 316, serine 320, and serine 321. The segment at 273 to 315 (SALKNSHKALKALLRSLVGLQEELLFQYPDTRYLVDGTKPNAG) is POLR2J binding. The segment at 309-333 (GTKPNAGSEEISSEDDELVEEKKQQ) is disordered. The tract at residues 316 to 372 (SEEISSEDDELVEEKKQQRRRVPAKRKLEMEDYPSFMAKRFADFTVYRNRTLQKWHD) is RB1 binding. The RB1 and SP1 binding stretch occupies residues 373–472 (KTKLASGKLG…FYHQLLRELI (100 aa)).

It belongs to the AATF family. In terms of assembly, part of the small subunit (SSU) processome, composed of more than 70 proteins and the RNA chaperone small nucleolar RNA (snoRNA) U3. Interacts with POLR2J, RB1/RB, RBL1/P107 and RBL2/P130. Interacts with PAWR and SP1. May also bind MAPT. In terms of processing, hyperphosphorylated during the G1/S phase transition. Ubiquitously expressed. Expressed at high levels in brain, heart, kidney, placenta and thymus.

It is found in the nucleus. Its subcellular location is the nucleolus. Part of the small subunit (SSU) processome, first precursor of the small eukaryotic ribosomal subunit. During the assembly of the SSU processome in the nucleolus, many ribosome biogenesis factors, an RNA chaperone and ribosomal proteins associate with the nascent pre-rRNA and work in concert to generate RNA folding, modifications, rearrangements and cleavage as well as targeted degradation of pre-ribosomal RNA by the RNA exosome. May function as a general inhibitor of the histone deacetylase HDAC1. Binding to the pocket region of RB1 may displace HDAC1 from RB1/E2F complexes, leading to activation of E2F target genes and cell cycle progression. Conversely, displacement of HDAC1 from SP1 bound to the CDKN1A promoter leads to increased expression of this CDK inhibitor and blocks cell cycle progression. Also antagonizes PAWR mediated induction of aberrant amyloid peptide production in Alzheimer disease (presenile and senile dementia), although the molecular basis for this phenomenon has not been described to date. The sequence is that of Protein AATF from Homo sapiens (Human).